A 146-amino-acid polypeptide reads, in one-letter code: Ribosome-binding factor A (146 aa).

A disordered region spans residues 127–146 (EFAGEADPYKKPEDDEAAES).

This sequence belongs to the RbfA family. In terms of assembly, monomer. Binds 30S ribosomal subunits, but not 50S ribosomal subunits or 70S ribosomes.

Its subcellular location is the cytoplasm. In terms of biological role, one of several proteins that assist in the late maturation steps of the functional core of the 30S ribosomal subunit. Associates with free 30S ribosomal subunits (but not with 30S subunits that are part of 70S ribosomes or polysomes). Required for efficient processing of 16S rRNA. May interact with the 5'-terminal helix region of 16S rRNA. The polypeptide is Ribosome-binding factor A (Renibacterium salmoninarum (strain ATCC 33209 / DSM 20767 / JCM 11484 / NBRC 15589 / NCIMB 2235)).